The chain runs to 469 residues: Citrate synthase, mitochondrial (469 aa).

The transit peptide at M1–S30 directs the protein to the mitochondrion. Residues H304 and H350 contribute to the active site. Residue R359 coordinates oxaloacetate. D405 is an active-site residue. Residues R431 and R451 each contribute to the oxaloacetate site.

The protein belongs to the citrate synthase family. Homodimer.

The protein resides in the mitochondrion matrix. The catalysed reaction is oxaloacetate + acetyl-CoA + H2O = citrate + CoA + H(+). It functions in the pathway carbohydrate metabolism; tricarboxylic acid cycle; isocitrate from oxaloacetate: step 1/2. Its function is as follows. Key enzyme of the Krebs tricarboxylic acid cycle which catalyzes the synthesis of citrate from acetyl coenzyme A and oxaloacetate. This Kajikia audax (Striped marlin) protein is Citrate synthase, mitochondrial (cs).